A 351-amino-acid polypeptide reads, in one-letter code: MSNATDPQMGDDDYDLNFTGMPPTDEDYSPCRLETQSLNKYVVIVTYALVFLLSLLGNSLVMLVILYRRVGRSVTDVYLLNLAMADLLFALTLPIWAASKVNGWIFGTFLCKVVSLLKEVNFYSGILLLACISVDRYLAIVHATRTLIQKRHSVKFVCLSCWGLSVILSLPFFLFRQAYHPNNSTPVCYEVLGNDTAKWRMVLRILPHTFGFTLPLLIMLFCYGFTLHTLFKAHIGQKHRAMRVIFAVVLIFLLCWLPYNLVLLADTLMRTHLIKESCERRNDIGRALDATEILGFLHSCLNPIIYAFIGQNFRHGFLKILATHGLVSKEFLARHHVTSYTSSSVNVSSNL.

Topologically, residues 1–46 (MSNATDPQMGDDDYDLNFTGMPPTDEDYSPCRLETQSLNKYVVIVT) are extracellular. Residues Asn3 and Asn17 are each glycosylated (N-linked (GlcNAc...) asparagine). The chain crosses the membrane as a helical span at residues 47 to 67 (YALVFLLSLLGNSLVMLVILY). Over 68-76 (RRVGRSVTD) the chain is Cytoplasmic. A helical membrane pass occupies residues 77–97 (VYLLNLAMADLLFALTLPIWA). Over 98–112 (ASKVNGWIFGTFLCK) the chain is Extracellular. Cys111 and Cys188 are disulfide-bonded. Residues 113-133 (VVSLLKEVNFYSGILLLACIS) traverse the membrane as a helical segment. The Cytoplasmic segment spans residues 134 to 154 (VDRYLAIVHATRTLIQKRHSV). The helical transmembrane segment at 155–175 (KFVCLSCWGLSVILSLPFFLF) threads the bilayer. The Extracellular portion of the chain corresponds to 176–204 (RQAYHPNNSTPVCYEVLGNDTAKWRMVLR). Asn182 and Asn194 each carry an N-linked (GlcNAc...) asparagine glycan. The chain crosses the membrane as a helical span at residues 205 to 225 (ILPHTFGFTLPLLIMLFCYGF). Topologically, residues 226-243 (TLHTLFKAHIGQKHRAMR) are cytoplasmic. The helical transmembrane segment at 244–264 (VIFAVVLIFLLCWLPYNLVLL) threads the bilayer. Over 265-289 (ADTLMRTHLIKESCERRNDIGRALD) the chain is Extracellular. A helical transmembrane segment spans residues 290–310 (ATEILGFLHSCLNPIIYAFIG). Topologically, residues 311–351 (QNFRHGFLKILATHGLVSKEFLARHHVTSYTSSSVNVSSNL) are cytoplasmic.

The protein belongs to the G-protein coupled receptor 1 family. In terms of assembly, interacts with IL8. Interacts with GNAI2.

Its subcellular location is the cell membrane. Receptor to interleukin-8, which is a powerful neutrophils chemotactic factor. Binding of IL-8 to the receptor causes activation of neutrophils. This response is mediated via a G-protein that activates a phosphatidylinositol-calcium second messenger system. The protein is C-X-C chemokine receptor type 1 (CXCR1) of Macaca mulatta (Rhesus macaque).